Consider the following 513-residue polypeptide: V-type proton ATPase subunit B, kidney isoform (513 aa).

Residue arginine 394 participates in ATP binding. Residues 510 to 513 (DTAL) carry the PDZ-binding motif.

It belongs to the ATPase alpha/beta chains family. As to quaternary structure, V-ATPase is a heteromultimeric enzyme made up of two complexes: the ATP-hydrolytic V1 complex and the proton translocation V0 complex. The V1 complex consists of three catalytic AB heterodimers that form a heterohexamer, three peripheral stalks each consisting of EG heterodimers, one central rotor including subunits D and F, and the regulatory subunits C and H. The proton translocation complex V0 consists of the proton transport subunit a, a ring of proteolipid subunits c9c'', rotary subunit d, subunits e and f, and the accessory subunits ATP6AP1/Ac45 and ATP6AP2/PRR. Forms a complex with NHERF1 and SCL4A7. Kidney; localizes to early distal nephron, encompassing thick ascending limbs and distal convoluted tubules (at protein level). Expressed in the cochlea and endolymphatic sac.

It is found in the apical cell membrane. The protein resides in the basolateral cell membrane. Non-catalytic subunit of the V1 complex of vacuolar(H+)-ATPase (V-ATPase), a multisubunit enzyme composed of a peripheral complex (V1) that hydrolyzes ATP and a membrane integral complex (V0) that translocates protons. V-ATPase is responsible for acidifying and maintaining the pH of intracellular compartments and in some cell types, is targeted to the plasma membrane, where it is responsible for acidifying the extracellular environment. Essential for the proper assembly and activity of V-ATPase. In renal intercalated cells, mediates secretion of protons (H+) into the urine thereby ensuring correct urinary acidification. Required for optimal olfactory function by mediating the acidification of the nasal olfactory epithelium. The polypeptide is V-type proton ATPase subunit B, kidney isoform (ATP6V1B1) (Homo sapiens (Human)).